Consider the following 82-residue polypeptide: Small ribosomal subunit protein bS18 (82 aa).

Positions 1-25 (MADTSSSQARRPFHRRRKTCPFSGA) are disordered.

This sequence belongs to the bacterial ribosomal protein bS18 family. In terms of assembly, part of the 30S ribosomal subunit. Forms a tight heterodimer with protein bS6.

In terms of biological role, binds as a heterodimer with protein bS6 to the central domain of the 16S rRNA, where it helps stabilize the platform of the 30S subunit. The protein is Small ribosomal subunit protein bS18 of Agrobacterium fabrum (strain C58 / ATCC 33970) (Agrobacterium tumefaciens (strain C58)).